We begin with the raw amino-acid sequence, 473 residues long: Ribulose bisphosphate carboxylase large chain (473 aa).

The necessary and sufficient to target proteins to carboxysomes, interacts with shell proteins stretch occupies residues 1 to 136; sequence MAVKKYSAGV…RLEDVRFPLA (136 aa). Substrate-binding residues include asparagine 116 and threonine 166. Catalysis depends on lysine 168, which acts as the Proton acceptor. Lysine 170 lines the substrate pocket. Mg(2+) is bound by residues lysine 194, aspartate 196, and glutamate 197. Lysine 194 bears the N6-carboxylysine mark. Histidine 287 acts as the Proton acceptor in catalysis. Residues arginine 288, histidine 320, and serine 372 each coordinate substrate.

It belongs to the RuBisCO large chain family. Type I subfamily. In terms of assembly, heterohexadecamer of 8 large chains and 8 small chains. Forms a CsoS2-CsoS1-RuBisCO complex. The N-terminus (residues 1-136) interacts with shell proteins CsoS1A, CsoS1B and CsoS1C. Holo-RuBisCO interacts with the N-terminal repeats of CsoS2; binding is sensitive to ionic strength. A fusion of a single N-terminal repeat to the C-terminus of the large subunit of RuBisCO (cbbL) shows the repeat can lie between a CbbL dimer, making minor contacts to CbbS; thus each RuBisCO holoenzyme could bind 8 repeats. Mg(2+) serves as cofactor.

It localises to the carboxysome. It catalyses the reaction 2 (2R)-3-phosphoglycerate + 2 H(+) = D-ribulose 1,5-bisphosphate + CO2 + H2O. The catalysed reaction is D-ribulose 1,5-bisphosphate + O2 = 2-phosphoglycolate + (2R)-3-phosphoglycerate + 2 H(+). Functionally, ruBisCO catalyzes two reactions: the carboxylation of D-ribulose 1,5-bisphosphate, the primary event in carbon dioxide fixation, as well as the oxidative fragmentation of the pentose substrate. Both reactions occur simultaneously and in competition at the same active site. There are estimated to be 270 RuBisCO heterohexadecamers per carboxysome. Its function is as follows. Alpha-carboxysomes are able to assemble in the absence of RuBisCO, unlike beta-carboxysomes. The RuBisCO large subunit is required for enzyme integration into carboxysomes; replacing it with the carboxysomally targeted gene (Tcr_0838, AC Q31HD9) of H.crungenus places RuBisCO in the carboxysome, while the non-carboxysomal large subunit of H.crungenus (Tcr_0427, AC Q31IK0) is not incorporated in the carboxysome. This chain is Ribulose bisphosphate carboxylase large chain, found in Halothiobacillus neapolitanus (strain ATCC 23641 / c2) (Thiobacillus neapolitanus).